A 477-amino-acid chain; its full sequence is Chaperonin GroEL 2 (477 aa).

Residues 29-32 (TLGP), 86-90 (DGTTT), and glycine 416 each bind ATP.

The protein belongs to the chaperonin (HSP60) family. Forms a cylinder of 14 subunits composed of two heptameric rings stacked back-to-back. Interacts with the co-chaperonin GroES.

The protein localises to the cytoplasm. It carries out the reaction ATP + H2O + a folded polypeptide = ADP + phosphate + an unfolded polypeptide.. In terms of biological role, together with its co-chaperonin GroES, plays an essential role in assisting protein folding. The GroEL-GroES system forms a nano-cage that allows encapsulation of the non-native substrate proteins and provides a physical environment optimized to promote and accelerate protein folding. The protein is Chaperonin GroEL 2 of Streptomyces lividans.